Consider the following 166-residue polypeptide: 6,7-dimethyl-8-ribityllumazine synthase (166 aa).

5-amino-6-(D-ribitylamino)uracil-binding positions include Phe24, Ala58–Glu60, and Ala82–Ile84. Glu87–Thr88 contributes to the (2S)-2-hydroxy-3-oxobutyl phosphate binding site. The Proton donor role is filled by His90. Asn115 contacts 5-amino-6-(D-ribitylamino)uracil. Arg129 contributes to the (2S)-2-hydroxy-3-oxobutyl phosphate binding site.

The protein belongs to the DMRL synthase family.

The enzyme catalyses (2S)-2-hydroxy-3-oxobutyl phosphate + 5-amino-6-(D-ribitylamino)uracil = 6,7-dimethyl-8-(1-D-ribityl)lumazine + phosphate + 2 H2O + H(+). The protein operates within cofactor biosynthesis; riboflavin biosynthesis; riboflavin from 2-hydroxy-3-oxobutyl phosphate and 5-amino-6-(D-ribitylamino)uracil: step 1/2. Catalyzes the formation of 6,7-dimethyl-8-ribityllumazine by condensation of 5-amino-6-(D-ribitylamino)uracil with 3,4-dihydroxy-2-butanone 4-phosphate. This is the penultimate step in the biosynthesis of riboflavin. This chain is 6,7-dimethyl-8-ribityllumazine synthase, found in Ralstonia pickettii (strain 12J).